The primary structure comprises 310 residues: Serine protease 30 (310 aa).

Residues 1–21 (MESRARCIFLLLLQILTRARG) form the signal peptide. The propeptide at 22–36 (DILPSVCGHSRDAGK) is activation peptide. The Peptidase S1 domain occupies 37-277 (IVGGQDALEG…YVDWIQRILA (241 aa)). The cysteines at positions 63 and 79 are disulfide-linked. Catalysis depends on charge relay system residues His-78 and Asp-128. 3 disulfide bridges follow: Cys-161–Cys-235, Cys-191–Cys-214, and Cys-225–Cys-253. The active-site Charge relay system is Ser-229. N-linked (GlcNAc...) asparagine glycosylation is found at Asn-238 and Asn-279. Ser-281 carries GPI-anchor amidated serine lipidation. A propeptide spans 282–310 (DAYGYHSSASAAYQMLLPVLLAVALPGSL) (removed in mature form).

This sequence belongs to the peptidase S1 family. In terms of tissue distribution, expressed primarily in distal gut.

It localises to the cell membrane. Its activity is regulated as follows. Inhibited by aprotinin, leupeptin, benzamidine and soybean trypsin inhibitor. Partially inhibited by PMSF and DFP. Selectively cleaves synthetic peptide substrates of trypsin. Activates the epithelial sodium channel ENaC. The protein is Serine protease 30 (Prss30) of Mus musculus (Mouse).